Here is a 140-residue protein sequence, read N- to C-terminus: Arsenate-mycothiol transferase ArsC1 (140 aa).

This sequence belongs to the low molecular weight phosphotyrosine protein phosphatase family.

The protein localises to the cytoplasm. It catalyses the reaction mycothiol + arsenate = arseno-mycothiol + H2O. Its function is as follows. Involved in defense against toxic arsenate. Involved in the mycothiol/myoredoxin redox pathway which uses a mycothioltransferase mechanism; facilitates adduct formation between arsenate and mycothiol. The sequence is that of Arsenate-mycothiol transferase ArsC1 (arsC1) from Corynebacterium glutamicum (strain ATCC 13032 / K051).